The sequence spans 472 residues: ATP synthase subunit beta (472 aa).

155–162 (GGAGVGKT) contacts ATP.

It belongs to the ATPase alpha/beta chains family. F-type ATPases have 2 components, CF(1) - the catalytic core - and CF(0) - the membrane proton channel. CF(1) has five subunits: alpha(3), beta(3), gamma(1), delta(1), epsilon(1). CF(0) has three main subunits: a(1), b(2) and c(9-12). The alpha and beta chains form an alternating ring which encloses part of the gamma chain. CF(1) is attached to CF(0) by a central stalk formed by the gamma and epsilon chains, while a peripheral stalk is formed by the delta and b chains.

The protein localises to the cell inner membrane. It carries out the reaction ATP + H2O + 4 H(+)(in) = ADP + phosphate + 5 H(+)(out). Its function is as follows. Produces ATP from ADP in the presence of a proton gradient across the membrane. The catalytic sites are hosted primarily by the beta subunits. This chain is ATP synthase subunit beta, found in Fervidobacterium nodosum (strain ATCC 35602 / DSM 5306 / Rt17-B1).